Consider the following 305-residue polypeptide: Peroxisome biogenesis factor 2 (305 aa).

Over 1–15 the chain is Peroxisomal matrix; that stretch reads MASRKENAKSANRVL. A helical membrane pass occupies residues 16 to 42; that stretch reads RISQLDALELNKALEQLVWSQFTQCFH. Over 43 to 48 the chain is Cytoplasmic; sequence GFKPGL. The chain crosses the membrane as a helical span at residues 49-74; it reads LARFEPEVKACLWVFLWRFTIYSKNA. The Peroxisomal matrix segment spans residues 75–98; it reads TVGQSVLNIKYKNDFSPNLRYQPP. Lys-84 carries the N6-acetyllysine modification. The chain crosses the membrane as a helical span at residues 99–125; it reads SKNQKIWYAVCTIGGRWLEERCYDLFR. Topologically, residues 126–133 are cytoplasmic; it reads NHHLASFG. A helical transmembrane segment spans residues 134 to 160; that stretch reads KVKQCVNFVIGLLKLGGLINFLIFLQR. Residues 161–187 are Peroxisomal matrix-facing; the sequence is GKFATLTERLLGIHSVFCKPQNICEVG. A helical membrane pass occupies residues 188–211; that stretch reads FEYMNRELLWHGFAEFLIFLLPLI. At 212–305 the chain is on the cytoplasmic side; it reads NVQKLKAKLS…GIEMSEVNAL (94 aa). Positions 244, 247, 259, 261, 264, 267, 280, and 283 each coordinate Zn(2+). Residues 244-284 form an RING-type zinc finger; that stretch reads CALCGEWPTMPHTIGCEHIFCYFCAKSSFLFDVYFTCPKCG.

Belongs to the pex2/pex10/pex12 family. Component of the PEX2-PEX10-PEX12 retrotranslocation channel, composed of PEX2, PEX10 and PEX12. Post-translationally, forms intramolecular and intermolecular disulfide bonds in response to reactive oxygen species (ROS), promoting higher stability.

The protein resides in the peroxisome membrane. The catalysed reaction is [E2 ubiquitin-conjugating enzyme]-S-ubiquitinyl-L-cysteine + [acceptor protein]-L-cysteine = [E2 ubiquitin-conjugating enzyme]-L-cysteine + [acceptor protein]-S-ubiquitinyl-L-cysteine.. It carries out the reaction S-ubiquitinyl-[E2 ubiquitin-conjugating enzyme]-L-cysteine + [acceptor protein]-L-lysine = [E2 ubiquitin-conjugating enzyme]-L-cysteine + N(6)-ubiquitinyl-[acceptor protein]-L-lysine.. The protein operates within protein modification; protein ubiquitination. Functionally, E3 ubiquitin-protein ligase component of a retrotranslocation channel required for peroxisome organization by mediating export of the PEX5 receptor from peroxisomes to the cytosol, thereby promoting PEX5 recycling. The retrotranslocation channel is composed of PEX2, PEX10 and PEX12; each subunit contributing transmembrane segments that coassemble into an open channel that specifically allows the passage of PEX5 through the peroxisomal membrane. PEX2 also regulates peroxisome organization by acting as a E3 ubiquitin-protein ligase. PEX2 ubiquitinates PEX5 during its passage through the retrotranslocation channel: catalyzes monoubiquitination of PEX5 at 'Cys-11', a modification that acts as a signal for PEX5 extraction into the cytosol. Required for pexophagy in response to starvation by mediating ubiquitination of peroxisomal proteins, such as PEX5 and ABCD3/PMP70. Also involved in the response to reactive oxygen species (ROS) by mediating 'Lys-48'-linked polyubiquitination and subsequent degradation of PNPLA2/ATGL, thereby regulating lipolysis. The protein is Peroxisome biogenesis factor 2 of Homo sapiens (Human).